The chain runs to 213 residues: Large ribosomal subunit protein uL3 (213 aa).

The interval Lys-130–Arg-161 is disordered.

It belongs to the universal ribosomal protein uL3 family. As to quaternary structure, part of the 50S ribosomal subunit. Forms a cluster with proteins L14 and L19.

Its function is as follows. One of the primary rRNA binding proteins, it binds directly near the 3'-end of the 23S rRNA, where it nucleates assembly of the 50S subunit. In Picosynechococcus sp. (strain ATCC 27264 / PCC 7002 / PR-6) (Agmenellum quadruplicatum), this protein is Large ribosomal subunit protein uL3.